A 342-amino-acid polypeptide reads, in one-letter code: Phosphoribosylformylglycinamidine cyclo-ligase (342 aa).

This sequence belongs to the AIR synthase family.

The protein resides in the cytoplasm. The enzyme catalyses 2-formamido-N(1)-(5-O-phospho-beta-D-ribosyl)acetamidine + ATP = 5-amino-1-(5-phospho-beta-D-ribosyl)imidazole + ADP + phosphate + H(+). It participates in purine metabolism; IMP biosynthesis via de novo pathway; 5-amino-1-(5-phospho-D-ribosyl)imidazole from N(2)-formyl-N(1)-(5-phospho-D-ribosyl)glycinamide: step 2/2. This is Phosphoribosylformylglycinamidine cyclo-ligase from Staphylococcus aureus (strain bovine RF122 / ET3-1).